Reading from the N-terminus, the 301-residue chain is UDP-N-acetylenolpyruvoylglucosamine reductase (301 aa).

Positions 29–195 constitute an FAD-binding PCMH-type domain; that stretch reads KIGGPADVFV…VEAIFSLTRG (167 aa). R174 is an active-site residue. Residue S224 is the Proton donor of the active site. E294 is an active-site residue.

This sequence belongs to the MurB family. It depends on FAD as a cofactor.

The protein resides in the cytoplasm. It catalyses the reaction UDP-N-acetyl-alpha-D-muramate + NADP(+) = UDP-N-acetyl-3-O-(1-carboxyvinyl)-alpha-D-glucosamine + NADPH + H(+). The protein operates within cell wall biogenesis; peptidoglycan biosynthesis. Its function is as follows. Cell wall formation. This chain is UDP-N-acetylenolpyruvoylglucosamine reductase, found in Halalkalibacterium halodurans (strain ATCC BAA-125 / DSM 18197 / FERM 7344 / JCM 9153 / C-125) (Bacillus halodurans).